The primary structure comprises 425 residues: Bifunctional phosphoribosylaminoimidazole carboxylase/phosphoribosylaminoimidazole succinocarboxamide synthetase (425 aa).

An N-acetylalanine modification is found at alanine 2. The tract at residues 2–260 is SAICAR synthetase domain; sequence ATAEVLNIGR…WVADRVELLL (259 aa). The residue at position 22 (tyrosine 22) is a Phosphotyrosine. Phosphoserine is present on serine 27. Lysine 36 bears the N6-acetyllysine mark. Serine 107 carries the post-translational modification Phosphoserine. Residue threonine 238 is modified to Phosphothreonine. Lysine 247 carries the post-translational modification N6-acetyllysine. A linker region spans residues 261–266; sequence KSNSQC. The tract at residues 267 to 425 is AIR carboxylase domain; sequence RVVVLMGSTS…ADKKIRECNL (159 aa). Serine 274 carries the phosphoserine modification. Serine 332 serves as a coordination point for CO2.

In the N-terminal section; belongs to the SAICAR synthetase family. The protein in the C-terminal section; belongs to the AIR carboxylase family. Class II subfamily. As to quaternary structure, homooctamer.

It catalyses the reaction 5-amino-1-(5-phospho-D-ribosyl)imidazole-4-carboxylate + L-aspartate + ATP = (2S)-2-[5-amino-1-(5-phospho-beta-D-ribosyl)imidazole-4-carboxamido]succinate + ADP + phosphate + 2 H(+). The enzyme catalyses 5-amino-1-(5-phospho-D-ribosyl)imidazole-4-carboxylate + H(+) = 5-amino-1-(5-phospho-beta-D-ribosyl)imidazole + CO2. It functions in the pathway purine metabolism; IMP biosynthesis via de novo pathway; 5-amino-1-(5-phospho-D-ribosyl)imidazole-4-carboxamide from 5-amino-1-(5-phospho-D-ribosyl)imidazole-4-carboxylate: step 1/2. The protein operates within purine metabolism; IMP biosynthesis via de novo pathway; 5-amino-1-(5-phospho-D-ribosyl)imidazole-4-carboxylate from 5-amino-1-(5-phospho-D-ribosyl)imidazole (carboxylase route): step 1/1. Functionally, bifunctional phosphoribosylaminoimidazole carboxylase and phosphoribosylaminoimidazole succinocarboxamide synthetase catalyzing two reactions of the de novo purine biosynthetic pathway. The sequence is that of Bifunctional phosphoribosylaminoimidazole carboxylase/phosphoribosylaminoimidazole succinocarboxamide synthetase from Rattus norvegicus (Rat).